The primary structure comprises 2869 residues: uncharacterized protein (2869 aa).

Over residues 1–10 (MNINRNNIND) the composition is skewed to low complexity. 13 disordered regions span residues 1–132 (MNIN…SSNK), 171–349 (NNNN…DNYR), 380–485 (FNES…TSSS), 498–517 (KEKH…KPKK), 690–812 (NQNQ…NQNQ), 860–1074 (INNN…INSN), 1108–1175 (INNI…NSNS), 1188–1216 (SNSN…VDVD), 1224–1243 (VFIV…SVKT), 1340–1448 (ESNS…GNNI), 1476–1704 (IDNC…SNYY), 1731–1832 (NSNS…NEGF), and 2725–2773 (DRVR…NNNE). Residues 14 to 25 (HSTSFNDNFDSF) are compositionally biased toward polar residues. Low complexity-rich tracts occupy residues 26-124 (GNQN…NPKN), 171-348 (NNNN…YDNY), 388-414 (NNNT…LNNN), 421-446 (YYDN…QTNK), and 454-478 (KNNN…NSNN). A compositionally biased stretch (basic and acidic residues) spans 505–514 (HENGDISESK). 2 stretches are compositionally biased toward low complexity: residues 690-707 (NQNQ…QNHQ) and 714-749 (PQRQ…NQDQ). Residues 750-763 (YQDHDHEHEHDHDQ) are compositionally biased toward basic and acidic residues. Residues 764-781 (NQNQNQNQHQSRNQNQDQ) are compositionally biased toward low complexity. Residues 782 to 795 (YQDHDHEHEHDHDQ) are compositionally biased toward basic and acidic residues. 5 stretches are compositionally biased toward low complexity: residues 796 to 812 (NQNQ…NQNQ), 860 to 891 (INNN…QSQN), 898 to 911 (DNRI…SSRD), 921 to 991 (CDFN…SFNN), and 1000 to 1074 (NNHN…INSN). Low complexity predominate over residues 1188–1212 (SNSNGFNNNNSNDQRNIDSSSNSDI). The segment covering 1230-1243 (TSSNKSNRASSVKT) has biased composition (polar residues). 2 stretches are compositionally biased toward low complexity: residues 1377–1448 (DNGN…GNNI) and 1476–1639 (IDNC…NDND). A compositionally biased stretch (acidic residues) spans 1640-1659 (IGNDFDNDNDNDSYIDDDNN). Composition is skewed to low complexity over residues 1660-1704 (VYDN…SNYY), 1731-1823 (NSNS…NNNS), and 2739-2754 (SSSG…SGGS). Acidic residues predominate over residues 2758 to 2773 (NLDDSENESDSENNNE).

This is an uncharacterized protein from Dictyostelium discoideum (Social amoeba).